The chain runs to 281 residues: Probable endonuclease 4 (281 aa).

Zn(2+)-binding residues include H69, H109, E145, D179, H182, H216, D229, H231, and E261.

This sequence belongs to the AP endonuclease 2 family. The cofactor is Zn(2+).

The catalysed reaction is Endonucleolytic cleavage to 5'-phosphooligonucleotide end-products.. In terms of biological role, endonuclease IV plays a role in DNA repair. It cleaves phosphodiester bonds at apurinic or apyrimidinic (AP) sites, generating a 3'-hydroxyl group and a 5'-terminal sugar phosphate. The protein is Probable endonuclease 4 of Aeromonas salmonicida (strain A449).